The chain runs to 299 residues: Pentalenolactone F synthase (299 aa).

Residues His105 and Asp107 each contribute to the Fe cation site. 2 residues coordinate 2-oxoglutarate: Thr133 and Trp251. His266 lines the Fe cation pocket. Residue Arg277 coordinates 2-oxoglutarate.

It belongs to the TfdA dioxygenase family. Fe(2+) is required as a cofactor.

The catalysed reaction is pentalenolactone D + 2 2-oxoglutarate + 2 O2 = pentalenolactone F + 2 succinate + 2 CO2 + H2O. Its pathway is antibiotic biosynthesis; pentalenolactone biosynthesis. Activated by ascorbate. Catalyzes the Fe(2+) and alpha-ketoglutarate-dependent oxidation of pentalenolactone D to pentalenolactone F in the biosynthesis of pentalenolactone antibiotic. Also able to catalyze the oxidation of pentalenolactone D to pentalenolactone E. This is Pentalenolactone F synthase (pntD) from Streptomyces arenae.